Here is a 295-residue protein sequence, read N- to C-terminus: UDP-N-acetylenolpyruvoylglucosamine reductase (295 aa).

In terms of domain architecture, FAD-binding PCMH-type spans 23-188; the sequence is KVGGPADFLA…ISAKFALKPG (166 aa). R167 is a catalytic residue. S217 functions as the Proton donor in the catalytic mechanism. E287 is an active-site residue.

The protein belongs to the MurB family. Requires FAD as cofactor.

Its subcellular location is the cytoplasm. The catalysed reaction is UDP-N-acetyl-alpha-D-muramate + NADP(+) = UDP-N-acetyl-3-O-(1-carboxyvinyl)-alpha-D-glucosamine + NADPH + H(+). The protein operates within cell wall biogenesis; peptidoglycan biosynthesis. Functionally, cell wall formation. The protein is UDP-N-acetylenolpyruvoylglucosamine reductase of Streptococcus pyogenes serotype M49 (strain NZ131).